Here is a 242-residue protein sequence, read N- to C-terminus: Biosynthetic peptidoglycan transglycosylase (242 aa).

Residues 19–39 form a helical membrane-spanning segment; that stretch reads LMVVLAVFWGGGIALFSVAPV.

It belongs to the glycosyltransferase 51 family.

It is found in the cell inner membrane. The enzyme catalyses [GlcNAc-(1-&gt;4)-Mur2Ac(oyl-L-Ala-gamma-D-Glu-L-Lys-D-Ala-D-Ala)](n)-di-trans,octa-cis-undecaprenyl diphosphate + beta-D-GlcNAc-(1-&gt;4)-Mur2Ac(oyl-L-Ala-gamma-D-Glu-L-Lys-D-Ala-D-Ala)-di-trans,octa-cis-undecaprenyl diphosphate = [GlcNAc-(1-&gt;4)-Mur2Ac(oyl-L-Ala-gamma-D-Glu-L-Lys-D-Ala-D-Ala)](n+1)-di-trans,octa-cis-undecaprenyl diphosphate + di-trans,octa-cis-undecaprenyl diphosphate + H(+). The protein operates within cell wall biogenesis; peptidoglycan biosynthesis. Peptidoglycan polymerase that catalyzes glycan chain elongation from lipid-linked precursors. This chain is Biosynthetic peptidoglycan transglycosylase, found in Escherichia coli (strain SMS-3-5 / SECEC).